A 480-amino-acid polypeptide reads, in one-letter code: Sulfate adenylyltransferase subunit 1 (480 aa).

The tr-type G domain maps to 30 to 248; the sequence is KGLLRFLTCG…TVDVKKEASK (219 aa). The interval 39–46 is G1; sequence GSVDDGKS. 39–46 is a binding site for GTP; that stretch reads GSVDDGKS. The segment at 97–101 is G2; it reads GITID. The segment at 118-121 is G3; the sequence is DTPG. GTP is bound by residues 118–122 and 173–176; these read DTPGH and NKMD. The segment at 173–176 is G4; the sequence is NKMD. The G5 stretch occupies residues 211–213; that stretch reads SAL.

It belongs to the TRAFAC class translation factor GTPase superfamily. Classic translation factor GTPase family. CysN/NodQ subfamily. As to quaternary structure, heterodimer composed of CysD, the smaller subunit, and CysN.

The enzyme catalyses sulfate + ATP + H(+) = adenosine 5'-phosphosulfate + diphosphate. The protein operates within sulfur metabolism; hydrogen sulfide biosynthesis; sulfite from sulfate: step 1/3. With CysD forms the ATP sulfurylase (ATPS) that catalyzes the adenylation of sulfate producing adenosine 5'-phosphosulfate (APS) and diphosphate, the first enzymatic step in sulfur assimilation pathway. APS synthesis involves the formation of a high-energy phosphoric-sulfuric acid anhydride bond driven by GTP hydrolysis by CysN coupled to ATP hydrolysis by CysD. The polypeptide is Sulfate adenylyltransferase subunit 1 (Photorhabdus laumondii subsp. laumondii (strain DSM 15139 / CIP 105565 / TT01) (Photorhabdus luminescens subsp. laumondii)).